We begin with the raw amino-acid sequence, 214 residues long: Pyridoxine/pyridoxamine 5'-phosphate oxidase (214 aa).

Substrate contacts are provided by residues 9 to 12 and Lys-67; that span reads RREY. Residues 62 to 67, 77 to 78, Arg-83, Lys-84, and Gln-106 each bind FMN; these read RTVLLK and YS. Substrate-binding residues include Tyr-124, Arg-128, and Ser-132. FMN-binding positions include 141-142 and Trp-186; that span reads QS. 192-194 is a binding site for substrate; it reads RLH. Position 196 (Arg-196) interacts with FMN.

This sequence belongs to the pyridoxamine 5'-phosphate oxidase family. Homodimer. Requires FMN as cofactor.

It carries out the reaction pyridoxamine 5'-phosphate + O2 + H2O = pyridoxal 5'-phosphate + H2O2 + NH4(+). It catalyses the reaction pyridoxine 5'-phosphate + O2 = pyridoxal 5'-phosphate + H2O2. It functions in the pathway cofactor metabolism; pyridoxal 5'-phosphate salvage; pyridoxal 5'-phosphate from pyridoxamine 5'-phosphate: step 1/1. Its pathway is cofactor metabolism; pyridoxal 5'-phosphate salvage; pyridoxal 5'-phosphate from pyridoxine 5'-phosphate: step 1/1. Its function is as follows. Catalyzes the oxidation of either pyridoxine 5'-phosphate (PNP) or pyridoxamine 5'-phosphate (PMP) into pyridoxal 5'-phosphate (PLP). In Porphyromonas gingivalis (strain ATCC 33277 / DSM 20709 / CIP 103683 / JCM 12257 / NCTC 11834 / 2561), this protein is Pyridoxine/pyridoxamine 5'-phosphate oxidase.